The following is a 306-amino-acid chain: Agmatinase (306 aa).

Positions 126, 149, 151, 153, 230, and 232 each coordinate Mn(2+).

It belongs to the arginase family. Agmatinase subfamily. Mn(2+) serves as cofactor.

It carries out the reaction agmatine + H2O = urea + putrescine. It functions in the pathway amine and polyamine biosynthesis; putrescine biosynthesis via agmatine pathway; putrescine from agmatine: step 1/1. Functionally, catalyzes the formation of putrescine from agmatine. The chain is Agmatinase from Cronobacter sakazakii (strain ATCC BAA-894) (Enterobacter sakazakii).